The sequence spans 514 residues: Probable endopolygalacturonase D (514 aa).

An N-terminal signal peptide occupies residues 1 to 16 (MKRCALLTPLLPLALA). Residues 134–166 (IKSSSPGPSSSFAAAATTEAPTSTRASPYTPYT) form a disordered region. A compositionally biased stretch (low complexity) spans 136–166 (SSSPGPSSSFAAAATTEAPTSTRASPYTPYT). C173 and C188 form a disulfide bridge. N240 is a glycosylation site (N-linked (GlcNAc...) asparagine). 7 PbH1 repeats span residues 280–302 (VYNS…DIEN), 303–341 (TESL…DIKS), 342–363 (STDL…AITS), 364–384 (GTNI…SIGS), 393–414 (VDGV…RIKT), 422–444 (VSNI…VVQQ), and 456–500 (SNGV…SITG). The interval 312-335 (TLDNSAGDEPNDSSDGDPAAHNSD) is disordered. Residue N322 is glycosylated (N-linked (GlcNAc...) asparagine). D356 (proton donor) is an active-site residue. Cysteines 358 and 374 form a disulfide. The N-linked (GlcNAc...) asparagine glycan is linked to N366. H378 is an active-site residue. N-linked (GlcNAc...) asparagine glycosylation is present at N429. Cysteines 483 and 488 form a disulfide. Residue N490 is glycosylated (N-linked (GlcNAc...) asparagine). A disulfide bridge links C506 with C513.

Belongs to the glycosyl hydrolase 28 family.

Its subcellular location is the secreted. It carries out the reaction (1,4-alpha-D-galacturonosyl)n+m + H2O = (1,4-alpha-D-galacturonosyl)n + (1,4-alpha-D-galacturonosyl)m.. In terms of biological role, involved in maceration and soft-rotting of plant tissue. Hydrolyzes the 1,4-alpha glycosidic bonds of de-esterified pectate in the smooth region of the plant cell wall. In Emericella nidulans (strain FGSC A4 / ATCC 38163 / CBS 112.46 / NRRL 194 / M139) (Aspergillus nidulans), this protein is Probable endopolygalacturonase D (pgaD).